The sequence spans 225 residues: Cytochrome c oxidase subunit 2 (225 aa).

Residues 1–26 lie on the Mitochondrial intermembrane side of the membrane; it reads MMTWSQMSFSDMNSPIMEQMVFFHDH. The chain crosses the membrane as a helical span at residues 27-48; that stretch reads SMMIILMITILTIYMITNIMMN. Topologically, residues 49-62 are mitochondrial matrix; the sequence is NLLSRSMMEGQEIE. A helical transmembrane segment spans residues 63–82; it reads IIWTIIPAITLIFIAIPSLH. At 83–225 the chain is on the mitochondrial intermembrane side; sequence LLYLTDETFN…KNFINFINSS (143 aa). The Cu cation site is built by histidine 160, cysteine 195, glutamate 197, cysteine 199, histidine 203, and methionine 206. Residue glutamate 197 participates in Mg(2+) binding.

It belongs to the cytochrome c oxidase subunit 2 family. Component of the cytochrome c oxidase (complex IV, CIV), a multisubunit enzyme composed of a catalytic core of 3 subunits and several supernumerary subunits. The complex exists as a monomer or a dimer and forms supercomplexes (SCs) in the inner mitochondrial membrane with ubiquinol-cytochrome c oxidoreductase (cytochrome b-c1 complex, complex III, CIII). The cofactor is Cu cation.

Its subcellular location is the mitochondrion inner membrane. The enzyme catalyses 4 Fe(II)-[cytochrome c] + O2 + 8 H(+)(in) = 4 Fe(III)-[cytochrome c] + 2 H2O + 4 H(+)(out). Component of the cytochrome c oxidase, the last enzyme in the mitochondrial electron transport chain which drives oxidative phosphorylation. The respiratory chain contains 3 multisubunit complexes succinate dehydrogenase (complex II, CII), ubiquinol-cytochrome c oxidoreductase (cytochrome b-c1 complex, complex III, CIII) and cytochrome c oxidase (complex IV, CIV), that cooperate to transfer electrons derived from NADH and succinate to molecular oxygen, creating an electrochemical gradient over the inner membrane that drives transmembrane transport and the ATP synthase. Cytochrome c oxidase is the component of the respiratory chain that catalyzes the reduction of oxygen to water. Electrons originating from reduced cytochrome c in the intermembrane space (IMS) are transferred via the dinuclear copper A center (CU(A)) of subunit 2 and heme A of subunit 1 to the active site in subunit 1, a binuclear center (BNC) formed by heme A3 and copper B (CU(B)). The BNC reduces molecular oxygen to 2 water molecules using 4 electrons from cytochrome c in the IMS and 4 protons from the mitochondrial matrix. This chain is Cytochrome c oxidase subunit 2 (COII), found in Rhipicephalus sanguineus (Brown dog tick).